The chain runs to 328 residues: Arabinose 5-phosphate isomerase KdsD (328 aa).

An SIS domain is found at 42 to 184 (CEKMFWCKGK…AVALLKARGF (143 aa)). Substrate is bound by residues 75 to 76 (GT), histidine 82, histidine 88, 114 to 123 (ALIPVLKRLH), 148 to 150 (KVA), threonine 222, and aspartate 275. Histidine 82 lines the Zn(2+) pocket. Residues 210–268 (MHTGDEIPHVKKTASLRDALLEVTRKNLGMTVICDDNMMIEGIFTDGDLRRVFDMGVDV) enclose the CBS 1 domain. The CBS 2 domain occupies 277-328 (MTPGGIRVRPGILAVEALNLMQSRHITSVMVADGDHLLGVLHMHDLLRAGVV).

Belongs to the SIS family. GutQ/KpsF subfamily. Homotetramer.

It carries out the reaction D-arabinose 5-phosphate = D-ribulose 5-phosphate. Its pathway is carbohydrate biosynthesis; 3-deoxy-D-manno-octulosonate biosynthesis; 3-deoxy-D-manno-octulosonate from D-ribulose 5-phosphate: step 1/3. It participates in bacterial outer membrane biogenesis; lipopolysaccharide biosynthesis. Its function is as follows. Involved in the biosynthesis of 3-deoxy-D-manno-octulosonate (KDO), a unique 8-carbon sugar component of lipopolysaccharides (LPSs). Catalyzes the reversible aldol-ketol isomerization between D-ribulose 5-phosphate (Ru5P) and D-arabinose 5-phosphate (A5P). This chain is Arabinose 5-phosphate isomerase KdsD (kdsD), found in Escherichia coli O157:H7.